The following is a 426-amino-acid chain: Cytochrome c biogenesis protein CcsB (426 aa).

A run of 3 helical transmembrane segments spans residues 14-34 (LKIAILLLLLIAISCAAGTLI), 72-92 (SFWFLFLLIWLGLALSVCSFR), and 162-182 (LGPILIHLGMILLMIGATYGS).

Belongs to the Ccs1/CcsB family. As to quaternary structure, may interact with CcsA.

It is found in the cellular thylakoid membrane. Functionally, required during biogenesis of c-type cytochromes (cytochrome c6 and cytochrome f) at the step of heme attachment. This is Cytochrome c biogenesis protein CcsB from Prochlorococcus marinus (strain NATL1A).